Here is a 451-residue protein sequence, read N- to C-terminus: Trigger factor (451 aa).

The region spanning 173–258 (GDRVTLDFVG…LKKIEWAHLP (86 aa)) is the PPIase FKBP-type domain.

This sequence belongs to the FKBP-type PPIase family. Tig subfamily.

Its subcellular location is the cytoplasm. The enzyme catalyses [protein]-peptidylproline (omega=180) = [protein]-peptidylproline (omega=0). Involved in protein export. Acts as a chaperone by maintaining the newly synthesized protein in an open conformation. Functions as a peptidyl-prolyl cis-trans isomerase. The protein is Trigger factor of Cupriavidus pinatubonensis (strain JMP 134 / LMG 1197) (Cupriavidus necator (strain JMP 134)).